The chain runs to 131 residues: MSWQTYVDEHLMCEIEGHHLASAAIFGHDGTVWAQSADFPQFKPEEITGIMKDLDEPGHLAPTGMFVAAAKYMVIQGEPGAVIRGKKGAGGITIKKTGQALVVGIYDEPMTPGQCNMVVERLGDYLVEQGM.

A disulfide bridge connects residues Cys13 and Cys115. An Involved in PIP2 interaction motif is present at residues 81-97; that stretch reads AVIRGKKGAGGITIKKT. A Phosphothreonine modification is found at Thr111.

It belongs to the profilin family. In terms of assembly, occurs in many kinds of cells as a complex with monomeric actin in a 1:1 ratio. Post-translationally, phosphorylated by MAP kinases.

It is found in the cytoplasm. The protein localises to the cytoskeleton. Functionally, binds to actin and affects the structure of the cytoskeleton. At high concentrations, profilin prevents the polymerization of actin, whereas it enhances it at low concentrations. By binding to PIP2, it inhibits the formation of IP3 and DG. The protein is Profilin-3 (PRO3) of Phleum pratense (Common timothy).